Consider the following 339-residue polypeptide: Phenylalanine--tRNA ligase alpha subunit (339 aa).

Glutamate 250 provides a ligand contact to Mg(2+).

This sequence belongs to the class-II aminoacyl-tRNA synthetase family. Phe-tRNA synthetase alpha subunit type 1 subfamily. In terms of assembly, tetramer of two alpha and two beta subunits. It depends on Mg(2+) as a cofactor.

Its subcellular location is the cytoplasm. The catalysed reaction is tRNA(Phe) + L-phenylalanine + ATP = L-phenylalanyl-tRNA(Phe) + AMP + diphosphate + H(+). This chain is Phenylalanine--tRNA ligase alpha subunit, found in Bacteroides thetaiotaomicron (strain ATCC 29148 / DSM 2079 / JCM 5827 / CCUG 10774 / NCTC 10582 / VPI-5482 / E50).